We begin with the raw amino-acid sequence, 142 residues long: Hemoglobin subunit alpha (142 aa).

One can recognise a Globin domain in the interval valine 2–arginine 142. Serine 4 is modified (phosphoserine). Residues lysine 8 and lysine 12 each carry the N6-succinyllysine modification. Lysine 17 bears the N6-acetyllysine; alternate mark. At lysine 17 the chain carries N6-succinyllysine; alternate. Tyrosine 25 bears the Phosphotyrosine mark. Lysine 41 carries the N6-succinyllysine modification. Residue histidine 59 coordinates O2. Histidine 88 provides a ligand contact to heme b. The residue at position 103 (serine 103) is a Phosphoserine. Position 109 is a phosphothreonine (threonine 109). A phosphoserine mark is found at serine 125 and serine 132. 2 positions are modified to phosphothreonine: threonine 135 and threonine 138. Serine 139 bears the Phosphoserine mark.

The protein belongs to the globin family. Heterotetramer of two alpha chains and two beta chains. As to expression, red blood cells.

In terms of biological role, involved in oxygen transport from the lung to the various peripheral tissues. Functionally, hemopressin acts as an antagonist peptide of the cannabinoid receptor CNR1. Hemopressin-binding efficiently blocks cannabinoid receptor CNR1 and subsequent signaling. In Balaenoptera acutorostrata (Common minke whale), this protein is Hemoglobin subunit alpha (HBA).